The primary structure comprises 331 residues: Glycerol-3-phosphate dehydrogenase [NAD(P)+] (331 aa).

NADPH-binding residues include W11, R30, and K105. The sn-glycerol 3-phosphate site is built by K105, G134, and S136. A138 serves as a coordination point for NADPH. Sn-glycerol 3-phosphate-binding residues include K189, D242, S252, R253, and N254. Residue K189 is the Proton acceptor of the active site. R253 contacts NADPH. Positions 277 and 279 each coordinate NADPH.

This sequence belongs to the NAD-dependent glycerol-3-phosphate dehydrogenase family.

The protein localises to the cytoplasm. It carries out the reaction sn-glycerol 3-phosphate + NAD(+) = dihydroxyacetone phosphate + NADH + H(+). The catalysed reaction is sn-glycerol 3-phosphate + NADP(+) = dihydroxyacetone phosphate + NADPH + H(+). Its pathway is membrane lipid metabolism; glycerophospholipid metabolism. Catalyzes the reduction of the glycolytic intermediate dihydroxyacetone phosphate (DHAP) to sn-glycerol 3-phosphate (G3P), the key precursor for phospholipid synthesis. This is Glycerol-3-phosphate dehydrogenase [NAD(P)+] from Herminiimonas arsenicoxydans.